An 88-amino-acid chain; its full sequence is Molybdopterin synthase sulfur carrier subunit (88 aa).

1-thioglycine; alternate is present on G88. Glycyl adenylate; alternate is present on G88.

Belongs to the MoaD family. MOCS2A subfamily. As to quaternary structure, heterotetramer; composed of 2 small (MOCS2A) and 2 large (MOCS2B) subunits. C-terminal thiocarboxylation occurs in 2 steps, it is first acyl-adenylated (-COAMP) via the hesA/moeB/thiF part of uba4, then thiocarboxylated (-COSH) via the rhodanese domain of uba4.

It is found in the cytoplasm. It participates in cofactor biosynthesis; molybdopterin biosynthesis. Functionally, acts as a sulfur carrier required for molybdopterin biosynthesis. Component of the molybdopterin synthase complex that catalyzes the conversion of precursor Z into molybdopterin by mediating the incorporation of 2 sulfur atoms into precursor Z to generate a dithiolene group. In the complex, serves as sulfur donor by being thiocarboxylated (-COSH) at its C-terminus by uba4. After interaction with MOCS2B, the sulfur is then transferred to precursor Z to form molybdopterin. The chain is Molybdopterin synthase sulfur carrier subunit from Aspergillus niger (strain ATCC MYA-4892 / CBS 513.88 / FGSC A1513).